We begin with the raw amino-acid sequence, 260 residues long: Cell division protein FtsQ (260 aa).

Residues 1–26 (MINKVLLEGQRITRSPQVKQHACGAS) lie on the Cytoplasmic side of the membrane. The helical transmembrane segment at 27–47 (FFLVVLLLIGGLLYSTISWMW) threads the bilayer. The Periplasmic segment spans residues 48–260 (DEQRLPLSKL…QELTQEKNDD (213 aa)). In terms of domain architecture, POTRA spans 52–122 (LPLSKLVLQG…DTIKVYLTEY (71 aa)).

Belongs to the FtsQ/DivIB family. FtsQ subfamily. As to quaternary structure, part of a complex composed of FtsB, FtsL and FtsQ.

The protein localises to the cell inner membrane. Functionally, essential cell division protein. May link together the upstream cell division proteins, which are predominantly cytoplasmic, with the downstream cell division proteins, which are predominantly periplasmic. May control correct divisome assembly. In Vibrio cholerae serotype O1 (strain ATCC 39315 / El Tor Inaba N16961), this protein is Cell division protein FtsQ.